Here is a 160-residue protein sequence, read N- to C-terminus: MPLYESVLIARNDVSQAQVETLVETIETLLKDNGGSIQKREFWGLRSLAYRIKKNRKGHYVLLGLDCTPDTLRELERQLGLNEDVLRVLTLRVDEIDENPSSVLARKSDDRGDRGNFRGGSKPAGRFESGRGGPRRSSEDREEYRARGEQDDARETAGAE.

Residues 100–160 (PSSVLARKSD…DDARETAGAE (61 aa)) form a disordered region. 2 stretches are compositionally biased toward basic and acidic residues: residues 106 to 116 (RKSDDRGDRGN) and 136 to 160 (RSSEDREEYRARGEQDDARETAGAE).

The protein belongs to the bacterial ribosomal protein bS6 family.

Its function is as follows. Binds together with bS18 to 16S ribosomal RNA. The polypeptide is Small ribosomal subunit protein bS6 (Gluconobacter oxydans (strain 621H) (Gluconobacter suboxydans)).